Here is a 395-residue protein sequence, read N- to C-terminus: S-adenosylmethionine synthase (395 aa).

His-15 serves as a coordination point for ATP. Asp-17 contributes to the Mg(2+) binding site. Glu-43 is a binding site for K(+). Positions 56 and 99 each coordinate L-methionine. Residues 99–109 form a flexible loop region; the sequence is QSPEIAQGVDR. ATP is bound by residues 164–166, 230–231, Asp-239, 245–246, Ala-262, and Lys-266; these read DAK, RF, and RK. Asp-239 lines the L-methionine pocket. An L-methionine-binding site is contributed by Lys-270.

The protein belongs to the AdoMet synthase family. Homotetramer; dimer of dimers. The cofactor is Mg(2+). K(+) serves as cofactor.

The protein localises to the cytoplasm. It catalyses the reaction L-methionine + ATP + H2O = S-adenosyl-L-methionine + phosphate + diphosphate. The protein operates within amino-acid biosynthesis; S-adenosyl-L-methionine biosynthesis; S-adenosyl-L-methionine from L-methionine: step 1/1. In terms of biological role, catalyzes the formation of S-adenosylmethionine (AdoMet) from methionine and ATP. The overall synthetic reaction is composed of two sequential steps, AdoMet formation and the subsequent tripolyphosphate hydrolysis which occurs prior to release of AdoMet from the enzyme. The sequence is that of S-adenosylmethionine synthase from Colwellia psychrerythraea (strain 34H / ATCC BAA-681) (Vibrio psychroerythus).